Here is a 156-residue protein sequence, read N- to C-terminus: ATP synthase subunit b (156 aa).

A helical membrane pass occupies residues 12–32 (VAFFIFVLFCMKFVWPPVIAA).

Belongs to the ATPase B chain family. In terms of assembly, F-type ATPases have 2 components, F(1) - the catalytic core - and F(0) - the membrane proton channel. F(1) has five subunits: alpha(3), beta(3), gamma(1), delta(1), epsilon(1). F(0) has three main subunits: a(1), b(2) and c(10-14). The alpha and beta chains form an alternating ring which encloses part of the gamma chain. F(1) is attached to F(0) by a central stalk formed by the gamma and epsilon chains, while a peripheral stalk is formed by the delta and b chains.

The protein localises to the cell inner membrane. F(1)F(0) ATP synthase produces ATP from ADP in the presence of a proton or sodium gradient. F-type ATPases consist of two structural domains, F(1) containing the extramembraneous catalytic core and F(0) containing the membrane proton channel, linked together by a central stalk and a peripheral stalk. During catalysis, ATP synthesis in the catalytic domain of F(1) is coupled via a rotary mechanism of the central stalk subunits to proton translocation. Functionally, component of the F(0) channel, it forms part of the peripheral stalk, linking F(1) to F(0). This is ATP synthase subunit b from Pseudomonas syringae pv. syringae (strain B728a).